Consider the following 290-residue polypeptide: Probable endonuclease 4 (290 aa).

Zn(2+) is bound by residues His66, His106, Glu143, Asp179, His182, His216, Asp229, His231, and Glu261.

It belongs to the AP endonuclease 2 family. Zn(2+) serves as cofactor.

The enzyme catalyses Endonucleolytic cleavage to 5'-phosphooligonucleotide end-products.. Endonuclease IV plays a role in DNA repair. It cleaves phosphodiester bonds at apurinic or apyrimidinic (AP) sites, generating a 3'-hydroxyl group and a 5'-terminal sugar phosphate. The chain is Probable endonuclease 4 from Solibacter usitatus (strain Ellin6076).